Here is a 299-residue protein sequence, read N- to C-terminus: Transcription elongation factor A protein 2 (299 aa).

One can recognise a TFIIS N-terminal domain in the interval 5 to 82 (EEIARIARRL…KSWKKLLDVS (78 aa)). Lys-57 is covalently cross-linked (Glycyl lysine isopeptide (Lys-Gly) (interchain with G-Cter in ubiquitin)). Ser-59 and Ser-100 each carry phosphoserine. A disordered region spans residues 83-126 (DGKSRDQGRGTPLPTSSSKDASGTTDLSCKKPDPPRTSSTPRIT). A compositionally biased stretch (polar residues) spans 95-109 (LPTSSSKDASGTTDL). A TFIIS central domain is found at 138 to 254 (VRNKCREMLT…EHQMARTGGT (117 aa)). The TFIIS-type zinc finger occupies 257 to 297 (DLFTCNKCRKKNCTYTQVQTRSSDEPMTTYVVCNECGNRWK). 4 residues coordinate Zn(2+): Cys-261, Cys-264, Cys-289, and Cys-292.

Belongs to the TFS-II family. In terms of assembly, interacts with the basal transcription factor GTF2B. Interacts with REXO1. In terms of tissue distribution, testis specific.

It localises to the nucleus. In terms of biological role, necessary for efficient RNA polymerase II transcription elongation past template-encoded arresting sites. The arresting sites in DNA have the property of trapping a certain fraction of elongating RNA polymerases that pass through, resulting in locked ternary complexes. Cleavage of the nascent transcript by S-II allows the resumption of elongation from the new 3'-terminus. This Rattus norvegicus (Rat) protein is Transcription elongation factor A protein 2 (Tcea2).